The chain runs to 392 residues: Chaperone protein DnaJ 2 (392 aa).

The 66-residue stretch at 10–75 folds into the J domain; it reads DFYKELGVSS…AKRKEYDETR (66 aa). Residues 161-239 form a CR-type zinc finger; sequence GVAMPLRLTS…CKGTGVTTRT (79 aa). 8 residues coordinate Zn(2+): C174, C177, C191, C194, C213, C216, C227, and C230. CXXCXGXG motif repeat units lie at residues 174 to 181, 191 to 198, 213 to 220, and 227 to 234; these read CTNCHGSG, CPTCNGSG, CTDCRGSG, and CDECKGTG.

It belongs to the DnaJ family. As to quaternary structure, homodimer. Zn(2+) serves as cofactor.

The protein localises to the cytoplasm. Functionally, participates actively in the response to hyperosmotic and heat shock by preventing the aggregation of stress-denatured proteins and by disaggregating proteins, also in an autonomous, DnaK-independent fashion. Unfolded proteins bind initially to DnaJ; upon interaction with the DnaJ-bound protein, DnaK hydrolyzes its bound ATP, resulting in the formation of a stable complex. GrpE releases ADP from DnaK; ATP binding to DnaK triggers the release of the substrate protein, thus completing the reaction cycle. Several rounds of ATP-dependent interactions between DnaJ, DnaK and GrpE are required for fully efficient folding. Also involved, together with DnaK and GrpE, in the DNA replication of plasmids through activation of initiation proteins. This Mycolicibacterium paratuberculosis (strain ATCC BAA-968 / K-10) (Mycobacterium paratuberculosis) protein is Chaperone protein DnaJ 2.